The chain runs to 122 residues: Small ribosomal subunit protein uS13 (122 aa).

Residues 97–122 are disordered; sequence PVRGQRTRTNARTRKGPRKTVAKKKK. Residues 101–122 are compositionally biased toward basic residues; sequence QRTRTNARTRKGPRKTVAKKKK.

This sequence belongs to the universal ribosomal protein uS13 family. In terms of assembly, part of the 30S ribosomal subunit. Forms a loose heterodimer with protein S19. Forms two bridges to the 50S subunit in the 70S ribosome.

Located at the top of the head of the 30S subunit, it contacts several helices of the 16S rRNA. In the 70S ribosome it contacts the 23S rRNA (bridge B1a) and protein L5 of the 50S subunit (bridge B1b), connecting the 2 subunits; these bridges are implicated in subunit movement. Contacts the tRNAs in the A and P-sites. The chain is Small ribosomal subunit protein uS13 from Caldanaerobacter subterraneus subsp. tengcongensis (strain DSM 15242 / JCM 11007 / NBRC 100824 / MB4) (Thermoanaerobacter tengcongensis).